We begin with the raw amino-acid sequence, 126 residues long: MFS14 protein (126 aa).

The segment at residues 1–23 (MALEAATAPRALLAACLVLLVLG) is a signal peptide (or 24, or 26).

Enhanced expression in male flowers. Accumulates in the tapetum.

This chain is MFS14 protein (MFS14), found in Zea mays (Maize).